We begin with the raw amino-acid sequence, 217 residues long: tRNA (guanine-N(7)-)-methyltransferase (217 aa).

S-adenosyl-L-methionine-binding residues include glutamate 43, aspartate 68, asparagine 101, and asparagine 123. Lysine 127 lines the substrate pocket. The interval 129-134 is interaction with RNA; the sequence is KHNKRR. Substrate is bound by residues aspartate 159 and 196–199; that span reads TEYE.

Belongs to the class I-like SAM-binding methyltransferase superfamily. TrmB family.

The catalysed reaction is guanosine(46) in tRNA + S-adenosyl-L-methionine = N(7)-methylguanosine(46) in tRNA + S-adenosyl-L-homocysteine. It functions in the pathway tRNA modification; N(7)-methylguanine-tRNA biosynthesis. Catalyzes the formation of N(7)-methylguanine at position 46 (m7G46) in tRNA. This Clostridium botulinum (strain Okra / Type B1) protein is tRNA (guanine-N(7)-)-methyltransferase.